We begin with the raw amino-acid sequence, 644 residues long: UvrABC system protein C (644 aa).

Residues Ala47 to Val125 enclose the GIY-YIG domain. The 36-residue stretch at Thr235 to Ile270 folds into the UVR domain.

It belongs to the UvrC family. In terms of assembly, interacts with UvrB in an incision complex.

It is found in the cytoplasm. Its function is as follows. The UvrABC repair system catalyzes the recognition and processing of DNA lesions. UvrC both incises the 5' and 3' sides of the lesion. The N-terminal half is responsible for the 3' incision and the C-terminal half is responsible for the 5' incision. This Sphingopyxis alaskensis (strain DSM 13593 / LMG 18877 / RB2256) (Sphingomonas alaskensis) protein is UvrABC system protein C.